Consider the following 530-residue polypeptide: Ubiquitin carboxyl-terminal hydrolase 17-like protein 18 (530 aa).

Residues 80–375 (AGLQNMGNTC…QAYVLFYIQK (296 aa)) enclose the USP domain. Cys-89 functions as the Nucleophile in the catalytic mechanism. His-334 (proton acceptor) is an active-site residue. Basic and acidic residues-rich tracts occupy residues 382–392 (SESVSRGREPR) and 398–413 (DTDRRAKQGELKRDHP). Disordered regions lie at residues 382–414 (SESVSRGREPRALGAEDTDRRAKQGELKRDHPC) and 509–530 (RGRARRSKGKNKHSKRALLVCQ). Residues 510–524 (GRARRSKGKNKHSKR) are compositionally biased toward basic residues.

This sequence belongs to the peptidase C19 family. USP17 subfamily.

The protein resides in the nucleus. It is found in the endoplasmic reticulum. The catalysed reaction is Thiol-dependent hydrolysis of ester, thioester, amide, peptide and isopeptide bonds formed by the C-terminal Gly of ubiquitin (a 76-residue protein attached to proteins as an intracellular targeting signal).. Functionally, deubiquitinating enzyme that removes conjugated ubiquitin from specific proteins to regulate different cellular processes that may include cell proliferation, progression through the cell cycle, apoptosis, cell migration, and the cellular response to viral infection. This chain is Ubiquitin carboxyl-terminal hydrolase 17-like protein 18 (USP17L18), found in Homo sapiens (Human).